A 62-amino-acid chain; its full sequence is Photosystem II reaction center protein H (62 aa).

Residues 30 to 50 (PVMAGIGFMLLIFLVTILQIY) traverse the membrane as a helical segment.

Belongs to the PsbH family. In terms of assembly, PSII is composed of 1 copy each of membrane proteins PsbA, PsbB, PsbC, PsbD, PsbE, PsbF, PsbH, PsbI, PsbJ, PsbK, PsbL, PsbM, PsbT, PsbX, PsbY, Psb30/Ycf12, peripheral proteins PsbO, CyanoQ (PsbQ), PsbU, PsbV and a large number of cofactors. It forms dimeric complexes.

The protein resides in the cellular thylakoid membrane. Functionally, one of the components of the core complex of photosystem II (PSII), required for its stability and/or assembly. PSII is a light-driven water:plastoquinone oxidoreductase that uses light energy to abstract electrons from H(2)O, generating O(2) and a proton gradient subsequently used for ATP formation. It consists of a core antenna complex that captures photons, and an electron transfer chain that converts photonic excitation into a charge separation. The sequence is that of Photosystem II reaction center protein H from Prochlorococcus marinus (strain MIT 9303).